Consider the following 956-residue polypeptide: Run domain Beclin-1-interacting and cysteine-rich domain-containing protein (956 aa).

The region spanning 49 to 190 (WSKYGGLERL…PRLLAQIDAS (142 aa)) is the RUN domain. An interaction with PIK3C3 region spans residues 50–181 (SKYGGLERLC…CLEAVEQNNP (132 aa)). S198 is subject to Phosphoserine. The tract at residues 205-437 (SQSLTALPGS…ITIIVEDPIA (233 aa)) is interaction with YWHAB. Low complexity predominate over residues 233-242 (SLQSMPQSSH). The segment at 233–423 (SLQSMPQSSH…TNIASRGAAG (191 aa)) is disordered. Phosphoserine occurs at positions 250 and 268. Residues 270-319 (AETQTTPAPLPSDSTLAQDSPLTAQEMSDSTLTSPLEASWVSSQNDSPSD) are compositionally biased toward polar residues. Positions 302–585 (TSPLEASWVS…DLEIQDADIR (284 aa)) are interaction with UVRAG. Positions 339 to 371 (ASCESHSSNGESSSSHLFSSSSSQKLESAASSL) are enriched in low complexity. Polar residues predominate over residues 379–395 (QSQAGSVLRRSSFSEGQ). Phosphoserine is present on residues S390, S412, S513, and S547. An interaction with BECN1 region spans residues 490–542 (AIELMKCNMMSQCLEEEEVEEEDSDREIQELKQKIRLRRQQIRTKNLLPAYRE). Positions 547–566 (SFRVTSSSSQFSSRDSTQLS) are enriched in low complexity. The tract at residues 547–579 (SFRVTSSSSQFSSRDSTQLSESGSAEDADDLEI) is disordered. An interaction with CYBA region spans residues 552-609 (SSSSQFSSRDSTQLSESGSAEDADDLEIQDADIRRSAVSNGKSSFSQNLSHCFLHSTS). A compositionally biased stretch (acidic residues) spans 570 to 579 (SAEDADDLEI). S655 is modified (phosphoserine). Positions 656–744 (PDDGQHADIY…HENAQMVVPS (89 aa)) are interaction with CARD9. The interval 705–956 (CAGCGIRTDP…ALEATVLETT (252 aa)) is interaction with Rab7.

In terms of assembly, associates with PI3K (PI3KC3/PI3K-III/class III phosphatidylinositol 3-kinase) complex II (PI3KC3-C2) in which the core composed of the catalytic subunit PIK3C3, the regulatory subunit PIK3R4 and BECN1 is associated with UVRAG; in the complex interacts directly with PI3KC3 and UVRAG. Interacts with Rab7 (RAB7A or RAB7B) (GTP-bound form); Rab7 and UVRAG compete for RUBCN binding; can interact simultaneously with Rab7 and the PI3K complex. Interacts with CYBA and CYBB; indicative for the association with the CYBA:CYBB NADPH oxidase heterodimer. Interacts with NOX4 and probably associates with the CYBA:NOX4 complex. Interacts with YWHAB and CARD9 in a competitive and stimulation-dependent manner; RUBCN exchanges interaction from YWHAB to CARD9 upon stimulation with beta-1,3-glucan.

It localises to the late endosome. The protein localises to the lysosome. Its subcellular location is the early endosome. Inhibits PIK3C3 activity; under basal conditions negatively regulates PI3K complex II (PI3KC3-C2) function in autophagy. Negatively regulates endosome maturation and degradative endocytic trafficking and impairs autophagosome maturation process. Can sequester UVRAG from association with a class C Vps complex (possibly the HOPS complex) and negatively regulates Rab7 activation. Functionally, involved in regulation of pathogen-specific host defense of activated macrophages. Following bacterial infection promotes NADH oxidase activity by association with CYBA thereby affecting TLR2 signaling and probably other TLR-NOX pathways. Stabilizes the CYBA:CYBB NADPH oxidase heterodimer, increases its association with TLR2 and its phagosome trafficking to induce antimicrobial burst of ROS and production of inflammatory cytokines. Following fungal or viral infection (implicating CLEC7A (dectin-1)-mediated myeloid cell activation or RIGI-dependent sensing of RNA viruses) negatively regulates pro-inflammatory cytokine production by association with CARD9 and sequestering it from signaling complexes. This is Run domain Beclin-1-interacting and cysteine-rich domain-containing protein from Mus musculus (Mouse).